A 244-amino-acid polypeptide reads, in one-letter code: Short-chain dehydrogenase/reductase family member NovK (244 aa).

NADP(+)-binding positions include 9–12 (GGGE), 59–60 (EL), and 154–158 (RPVLD).

This sequence belongs to the short-chain dehydrogenases/reductases (SDR) family. As to quaternary structure, heterotetramer; the NovJ(2)K(2) heterotetramer is composed of subunits of 2 NovJ and 2 subunits of NovK.

It participates in antibiotic biosynthesis; novobiocin biosynthesis. In terms of biological role, non-catalytic subunit of the NovJ(2)K(2) heterotetramer that catalyzes the NADPH-dependent reduction of the tyrosyl moiety of L-beta-OH-Tyr-S-NovH intermediate to yield the tethered beta-ketotyrosyl-S-NovH in the novobiocin biosynthesis pathway. Novobiocin is an aminocoumarin family antibiotic that targets bacterial DNA gyrases. The chain is Short-chain dehydrogenase/reductase family member NovK (novK) from Streptomyces niveus (Streptomyces spheroides).